We begin with the raw amino-acid sequence, 407 residues long: Imidazolonepropionase (407 aa).

Fe(3+)-binding residues include histidine 68 and histidine 70. Positions 68 and 70 each coordinate Zn(2+). 4-imidazolone-5-propanoate contacts are provided by arginine 77, tyrosine 140, and histidine 173. Tyrosine 140 provides a ligand contact to N-formimidoyl-L-glutamate. Residue histidine 238 participates in Fe(3+) binding. Histidine 238 serves as a coordination point for Zn(2+). Glutamine 241 contacts 4-imidazolone-5-propanoate. Aspartate 313 serves as a coordination point for Fe(3+). Aspartate 313 contacts Zn(2+). N-formimidoyl-L-glutamate-binding residues include asparagine 315 and glycine 317. 4-imidazolone-5-propanoate is bound at residue threonine 318.

It belongs to the metallo-dependent hydrolases superfamily. HutI family. It depends on Zn(2+) as a cofactor. Fe(3+) serves as cofactor.

The protein localises to the cytoplasm. The enzyme catalyses 4-imidazolone-5-propanoate + H2O = N-formimidoyl-L-glutamate. Its pathway is amino-acid degradation; L-histidine degradation into L-glutamate; N-formimidoyl-L-glutamate from L-histidine: step 3/3. Functionally, catalyzes the hydrolytic cleavage of the carbon-nitrogen bond in imidazolone-5-propanoate to yield N-formimidoyl-L-glutamate. It is the third step in the universal histidine degradation pathway. This Burkholderia ambifaria (strain MC40-6) protein is Imidazolonepropionase.